The following is a 359-amino-acid chain: UDP-3-O-acylglucosamine N-acyltransferase (359 aa).

H253 acts as the Proton acceptor in catalysis.

Belongs to the transferase hexapeptide repeat family. LpxD subfamily. Homotrimer.

It catalyses the reaction a UDP-3-O-[(3R)-3-hydroxyacyl]-alpha-D-glucosamine + a (3R)-hydroxyacyl-[ACP] = a UDP-2-N,3-O-bis[(3R)-3-hydroxyacyl]-alpha-D-glucosamine + holo-[ACP] + H(+). It functions in the pathway bacterial outer membrane biogenesis; LPS lipid A biosynthesis. Functionally, catalyzes the N-acylation of UDP-3-O-acylglucosamine using 3-hydroxyacyl-ACP as the acyl donor. Is involved in the biosynthesis of lipid A, a phosphorylated glycolipid that anchors the lipopolysaccharide to the outer membrane of the cell. This chain is UDP-3-O-acylglucosamine N-acyltransferase, found in Burkholderia cenocepacia (strain ATCC BAA-245 / DSM 16553 / LMG 16656 / NCTC 13227 / J2315 / CF5610) (Burkholderia cepacia (strain J2315)).